A 594-amino-acid chain; its full sequence is Keratin, type II cytoskeletal 2 oral (594 aa).

Residues 1–164 are head; the sequence is MSRQACKKSF…DPQIGQVKAQ (164 aa). Omega-N-methylarginine occurs at positions 85 and 104. Residues 165-200 form a coil 1A region; it reads EREQIKTLNNKFASFIDKVRFLEQQNKVLETKWELL. The region spanning 165–480 is the IF rod domain; the sequence is EREQIKTLNN…KLLEGEECRL (316 aa). Residues 201 to 221 form a linker 1 region; the sequence is QQQTIRSGSGPQNLEPFFESY. The segment at 222–313 is coil 1B; the sequence is ISCLRKQLDS…TLYDMELSQI (92 aa). A linker 12 region spans residues 314–337; that stretch reads QSHVSDTSVVLSMDNNRCLDLDSI. Residues 338–476 are coil 2; sequence IAEVKAQYED…ATYRKLLEGE (139 aa). The interval 477–594 is tail; it reads ECRLSGEFQN…TTSSSQQRSK (118 aa). Residues 497 to 594 are disordered; that stretch reads TSTSSSGSFR…TTSSSQQRSK (98 aa). Positions 506 to 522 are enriched in gly residues; that stretch reads RGTGGSNYGGDSSGRSG. Over residues 523 to 551 the composition is skewed to low complexity; it reads GSSSSSSRGSSSRGSSGSRLGSGGSISVS. Residue Arg541 is modified to Omega-N-methylarginine. Residues 552-564 are compositionally biased toward polar residues; it reads QQRMGFNSGGSQT. The segment covering 565–594 has biased composition (low complexity); it reads SVGSSYKSGRGGSSSVQFSQTTSSSQQRSK.

It belongs to the intermediate filament family. As to quaternary structure, heterotetramer of two type I and two type II keratins.

Functionally, probably contributes to terminal cornification. In Mus musculus (Mouse), this protein is Keratin, type II cytoskeletal 2 oral.